A 470-amino-acid polypeptide reads, in one-letter code: Cysteine--tRNA ligase (470 aa).

Residue C28 participates in Zn(2+) binding. The 'HIGH' region signature appears at P30 to N40. C212, H237, and E241 together coordinate Zn(2+). The 'KMSKS' region signature appears at K271–S275. K274 contacts ATP.

This sequence belongs to the class-I aminoacyl-tRNA synthetase family. In terms of assembly, monomer. Zn(2+) serves as cofactor.

It is found in the cytoplasm. The enzyme catalyses tRNA(Cys) + L-cysteine + ATP = L-cysteinyl-tRNA(Cys) + AMP + diphosphate. The protein is Cysteine--tRNA ligase of Lactiplantibacillus plantarum (strain ATCC BAA-793 / NCIMB 8826 / WCFS1) (Lactobacillus plantarum).